We begin with the raw amino-acid sequence, 515 residues long: Spermatogenesis-associated protein 2 (515 aa).

The PUB domain maps to Ala78–Ser150. Residues Thr321–Arg338 carry the PIM motif motif. The tract at residues Gly429–Thr452 is disordered.

The protein belongs to the SPATA2 family. In terms of assembly, interacts (via the PIM motif) with RNF31/HOIP (via the PUB domain); the interaction is direct. Interacts (via the PUB domain) with CYLD; the interaction is direct. In terms of tissue distribution, widely expressed, with highest expression in testis, lung and intestine, and lower expression in brain, heart and spleen. Present at high level in Sertoli cells: expressed from stage I to stage XII of the testis seminiferous epithelium (at protein level).

The protein resides in the cytoplasm. Its subcellular location is the nucleus. In terms of biological role, bridging factor that mediates the recruitment of CYLD to the LUBAC complex, thereby regulating TNF-alpha-induced necroptosis. Acts as a direct binding intermediate that bridges RNF31/HOIP, the catalytic subunit of the LUBAC complex, and the deubiquitinase (CYLD), thereby recruiting CYLD to the TNF-R1 signaling complex (TNF-RSC). Required to activate the 'Met-1'- (linear) and 'Lys-63'-linked deubiquitinase activities of CYLD. Controls the kinase activity of RIPK1 and TNF-alpha-induced necroptosis by promoting 'Met-1'-linked deubiquitination of RIPK1 by CYLD. This is Spermatogenesis-associated protein 2 from Mus musculus (Mouse).